A 237-amino-acid polypeptide reads, in one-letter code: Ribosomal RNA small subunit methyltransferase G (237 aa).

S-adenosyl-L-methionine contacts are provided by residues Gly-78, Phe-83, 129–130, and Arg-148; that span reads AE.

Belongs to the methyltransferase superfamily. RNA methyltransferase RsmG family.

It localises to the cytoplasm. Its function is as follows. Specifically methylates the N7 position of a guanine in 16S rRNA. This chain is Ribosomal RNA small subunit methyltransferase G, found in Clostridium kluyveri (strain ATCC 8527 / DSM 555 / NBRC 12016 / NCIMB 10680 / K1).